A 132-amino-acid polypeptide reads, in one-letter code: Probable prefoldin subunit 4 (132 aa).

This sequence belongs to the prefoldin subunit beta family. Heterohexamer of two PFD-alpha type and four PFD-beta type subunits.

Its function is as follows. Binds specifically to cytosolic chaperonin (c-CPN) and transfers target proteins to it. Binds to nascent polypeptide chain and promotes folding in an environment in which there are many competing pathways for nonnative proteins. This Dictyostelium discoideum (Social amoeba) protein is Probable prefoldin subunit 4 (pfdn4).